Here is a 228-residue protein sequence, read N- to C-terminus: Secreted LysM effector ECP6 (228 aa).

The signal sequence occupies residues 1-18 (MQSMILFAAALMGAAVNG). 4 cysteine pairs are disulfide-bonded: Cys-36–Cys-90, Cys-64–Cys-98, Cys-109–Cys-163, and Cys-168–Cys-220. Residues 42–86 (IKYTVVKGDTLTSIAKKFKSGICNIVSVNKLANPNLIELGATLII) enclose the LysM 1 domain. Chitin contacts are provided by Thr-51, Thr-53, Asn-76, and Ile-78. Residues Asn-89, Asn-95, Asn-127, and Asn-133 are each glycosylated (N-linked (GlcNAc...) asparagine). LysM domains follow at residues 115–160 (GSYT…IITV) and 172–216 (GTYN…QIIL). Chitin-binding residues include Gly-179, Leu-181, Val-183, Pro-205, Ser-206, and Leu-208. An N-linked (GlcNAc...) asparagine glycan is attached at Asn-222.

It belongs to the secreted LysM effector family. In terms of assembly, forms homodimers.

The protein localises to the secreted. Secreted effector that enables the plant pathogenic fungus to manipulate host defenses for successful infection. Binds chitine, but not to any other glycan, including the N-linked glycan chitobiose. Outcompetes host immune receptor for chitin binding through intrachain LysM dimerization. During infection, sequesters chitin oligosaccharides that are released from the cell walls of invading hyphae to prevent elicitation of host immunity. The polypeptide is Secreted LysM effector ECP6 (Passalora fulva (Tomato leaf mold)).